Reading from the N-terminus, the 248-residue chain is ATP synthase subunit a (248 aa).

A run of 7 helical transmembrane segments spans residues 29–49, 85–105, 115–135, 143–163, 176–196, 201–221, and 227–247; these read AMLT…CLFS, VFPF…QGLV, LIQT…IVLA, LFLP…IEIV, LFAN…VAWA, GGLL…LFGL, and LIQA…AIVL.

It belongs to the ATPase A chain family. As to quaternary structure, F-type ATPases have 2 components, CF(1) - the catalytic core - and CF(0) - the membrane proton channel. CF(1) has five subunits: alpha(3), beta(3), gamma(1), delta(1), epsilon(1). CF(0) has three main subunits: a, b and c.

It is found in the mitochondrion inner membrane. Its function is as follows. Mitochondrial membrane ATP synthase (F(1)F(0) ATP synthase or Complex V) produces ATP from ADP in the presence of a proton gradient across the membrane which is generated by electron transport complexes of the respiratory chain. F-type ATPases consist of two structural domains, F(1) - containing the extramembraneous catalytic core and F(0) - containing the membrane proton channel, linked together by a central stalk and a peripheral stalk. During catalysis, ATP synthesis in the catalytic domain of F(1) is coupled via a rotary mechanism of the central stalk subunits to proton translocation. Key component of the proton channel; it may play a direct role in the translocation of protons across the membrane. This is ATP synthase subunit a (ATP6) from Pylaiella littoralis (Seaweed).